Here is a 910-residue protein sequence, read N- to C-terminus: DNA mismatch repair protein MutS (910 aa).

Basic and acidic residues predominate over residues Met-1–Glu-11. The interval Met-1–Pro-21 is disordered. Gly-658–Ser-665 serves as a coordination point for ATP.

It belongs to the DNA mismatch repair MutS family.

In terms of biological role, this protein is involved in the repair of mismatches in DNA. It is possible that it carries out the mismatch recognition step. This protein has a weak ATPase activity. This chain is DNA mismatch repair protein MutS, found in Brucella canis (strain ATCC 23365 / NCTC 10854 / RM-666).